The sequence spans 67 residues: DNA-directed RNA polymerase subunit omega (67 aa).

This sequence belongs to the RNA polymerase subunit omega family. The RNAP catalytic core consists of 2 alpha, 1 beta, 1 beta' and 1 omega subunit. When a sigma factor is associated with the core the holoenzyme is formed, which can initiate transcription.

It carries out the reaction RNA(n) + a ribonucleoside 5'-triphosphate = RNA(n+1) + diphosphate. Its function is as follows. Promotes RNA polymerase assembly. Latches the N- and C-terminal regions of the beta' subunit thereby facilitating its interaction with the beta and alpha subunits. The chain is DNA-directed RNA polymerase subunit omega from Exiguobacterium sibiricum (strain DSM 17290 / CCUG 55495 / CIP 109462 / JCM 13490 / 255-15).